The primary structure comprises 421 residues: Gamma-glutamyl phosphate reductase (421 aa).

It belongs to the gamma-glutamyl phosphate reductase family.

Its subcellular location is the cytoplasm. The catalysed reaction is L-glutamate 5-semialdehyde + phosphate + NADP(+) = L-glutamyl 5-phosphate + NADPH + H(+). It participates in amino-acid biosynthesis; L-proline biosynthesis; L-glutamate 5-semialdehyde from L-glutamate: step 2/2. Catalyzes the NADPH-dependent reduction of L-glutamate 5-phosphate into L-glutamate 5-semialdehyde and phosphate. The product spontaneously undergoes cyclization to form 1-pyrroline-5-carboxylate. The protein is Gamma-glutamyl phosphate reductase of Brucella suis biovar 1 (strain 1330).